Reading from the N-terminus, the 147-residue chain is Putative pre-16S rRNA nuclease (147 aa).

The protein belongs to the YqgF nuclease family.

The protein localises to the cytoplasm. In terms of biological role, could be a nuclease involved in processing of the 5'-end of pre-16S rRNA. This chain is Putative pre-16S rRNA nuclease, found in Latilactobacillus sakei subsp. sakei (strain 23K) (Lactobacillus sakei subsp. sakei).